Here is a 532-residue protein sequence, read N- to C-terminus: Drimenyl diphosphate synthase (532 aa).

Positions 121, 122, 152, and 154 each coordinate (2E,6E)-farnesyl diphosphate. Glutamate 158 contributes to the Mg(2+) binding site. PFTB repeat units follow at residues 275 to 317 (PAAM…RVAG), 325 to 367 (IAAA…APNP), 428 to 469 (KRQA…SRDG), and 475 to 518 (LARA…CVLL). The Proton donor role is filled by aspartate 304. Arginine 502 is a (2E,6E)-farnesyl diphosphate binding site.

The protein belongs to the terpene cyclase/mutase family. The cofactor is Mg(2+). Requires Ni(2+) as cofactor. Co(2+) serves as cofactor.

It catalyses the reaction (2E,6E)-farnesyl diphosphate = (5S,9S,10S)-drim-7-en-11-yl diphosphate. Its function is as follows. Catalyzes the cyclization of farnesyl diphosphate (FPP) to drimenyl diphosphate. In Streptantibioticus cattleyicolor (strain ATCC 35852 / DSM 46488 / JCM 4925 / NBRC 14057 / NRRL 8057) (Streptomyces cattleya), this protein is Drimenyl diphosphate synthase.